The following is a 233-amino-acid chain: Large ribosomal subunit protein uL1 (233 aa).

Belongs to the universal ribosomal protein uL1 family. In terms of assembly, part of the 50S ribosomal subunit.

Binds directly to 23S rRNA. The L1 stalk is quite mobile in the ribosome, and is involved in E site tRNA release. Functionally, protein L1 is also a translational repressor protein, it controls the translation of the L11 operon by binding to its mRNA. The sequence is that of Large ribosomal subunit protein uL1 from Shewanella frigidimarina (strain NCIMB 400).